A 1094-amino-acid polypeptide reads, in one-letter code: AP-3 complex subunit beta-1 (1094 aa).

Residues 1–11 show a composition bias toward polar residues; that stretch reads MSSNSFPYNEQ. 2 disordered regions span residues 1–31 and 268–292; these read MSSNSFPYNEQSGGGEATELGQEATSTISPS and DNGKNFYESDDDQKEKTDKKKKPYT. Residues S276 and S609 each carry the phosphoserine modification. The tract at residues 662–811 is disordered; that stretch reads PAGKAKQENS…EKKTKQDRTP (150 aa). Basic and acidic residues predominate over residues 666–677; that stretch reads AKQENSAKKFYS. Composition is skewed to acidic residues over residues 678–696 and 705–726; these read ESEEEEDSSDSSSDSESES and ESGEEGDSNEDSSEDSSSEQDS. Composition is skewed to basic and acidic residues over residues 727 to 738 and 748 to 764; these read ESGRESGLENKR and GKSDSEDGEKENEKSKT. Phosphoserine occurs at positions 750 and 752. Residues 765–777 show a composition bias toward low complexity; sequence SDSSNDESSSIED. The span at 778-791 shows a compositional bias: acidic residues; it reads SSSDSESESEPESE. Residues 792 to 811 are compositionally biased toward basic and acidic residues; it reads SESRRVTKEKEKKTKQDRTP.

This sequence belongs to the adaptor complexes large subunit family. Adaptor protein complex 3 (AP-3) is a heterotetramer composed of two large adaptins (delta-type subunit AP3D1 and beta-type subunit AP3B1 or AP3B2), a medium adaptin (mu-type subunit AP3M1 or AP3M2) and a small adaptin (sigma-type subunit APS1 or AP3S2). AP-3 associates with the BLOC-1 complex. Interacts with KIF3A; interaction is direct; interaction is impaired by pyrophosphorylation of AP3B1. In terms of processing, phosphorylated on serine residues. Pyrophosphorylation by 5-diphosphoinositol pentakisphosphate (5-IP7) impairs interaction with KIF3A. Serine pyrophosphorylation is achieved by Mg(2+)-dependent, but enzyme independent transfer of a beta-phosphate from a inositol pyrophosphate to a pre-phosphorylated serine residue. In terms of tissue distribution, ubiquitously expressed.

It localises to the cytoplasmic vesicle. Its subcellular location is the clathrin-coated vesicle membrane. The protein resides in the golgi apparatus. Its function is as follows. Subunit of non-clathrin- and clathrin-associated adaptor protein complex 3 (AP-3) that plays a role in protein sorting in the late-Golgi/trans-Golgi network (TGN) and/or endosomes. The AP complexes mediate both the recruitment of clathrin to membranes and the recognition of sorting signals within the cytosolic tails of transmembrane cargo molecules. AP-3 appears to be involved in the sorting of a subset of transmembrane proteins targeted to lysosomes and lysosome-related organelles. In concert with the BLOC-1 complex, AP-3 is required to target cargos into vesicles assembled at cell bodies for delivery into neurites and nerve terminals. The protein is AP-3 complex subunit beta-1 (AP3B1) of Homo sapiens (Human).